Consider the following 624-residue polypeptide: RQC trigger complex subunit CUE3 (624 aa).

Residues 316 to 359 enclose the CUE domain; it reads VNEEQLSALMELFPQFSKYQLSQTLLAYDNNIELVTNKIFEDPT. Disordered regions lie at residues 366 to 390, 435 to 469, and 546 to 624; these read REPA…ELSI, RDDT…DDSN, and SKTG…NNAI. Phosphoserine is present on Ser377. 2 stretches are compositionally biased toward basic and acidic residues: residues 443 to 455 and 568 to 589; these read DVNR…RIGL and EQAK…TEQK. Basic residues predominate over residues 590–617; it reads KRQHAKNEKRKGARANHNRKKGHDKKLA.

As to quaternary structure, component of the RQT (ribosome quality control trigger) complex, composed of SLH1, CUE3, and RQT4. Interacts with ubiquitin; the interaction is direct. Interacts with SLH1. Interacts with RQT4. Interacts with HEL2. Associates with translating ribosomes.

The protein localises to the cytoplasm. Functionally, involved in activation of the ribosome quality control (RQC) pathway, a pathway that degrades nascent peptide chains during problematic translation. Specifically recognizes and binds RPS20/uS10 ubiquitinated by HEL2, promoting recruitment of the RQT (ribosome quality control trigger) complex on stalled ribosomes, followed by disassembly of stalled ribosomes. The polypeptide is RQC trigger complex subunit CUE3 (CUE3) (Saccharomyces cerevisiae (strain ATCC 204508 / S288c) (Baker's yeast)).